We begin with the raw amino-acid sequence, 445 residues long: Ribosomal protein uS12 methylthiotransferase RimO (445 aa).

Residues 4 to 119 (IKVALVSLGC…LLESIKVFLK (116 aa)) form the MTTase N-terminal domain. 6 residues coordinate [4Fe-4S] cluster: Cys13, Cys48, Cys82, Cys156, Cys160, and Cys163. One can recognise a Radical SAM core domain in the interval 142–372 (TTPTYTAYVR…MILQQSISKD (231 aa)). Residues 375-441 (KEKIGKIYEV…EYDLIGVVYN (67 aa)) form the TRAM domain.

The protein belongs to the methylthiotransferase family. RimO subfamily. [4Fe-4S] cluster serves as cofactor.

The protein resides in the cytoplasm. It catalyses the reaction L-aspartate(89)-[ribosomal protein uS12]-hydrogen + (sulfur carrier)-SH + AH2 + 2 S-adenosyl-L-methionine = 3-methylsulfanyl-L-aspartate(89)-[ribosomal protein uS12]-hydrogen + (sulfur carrier)-H + 5'-deoxyadenosine + L-methionine + A + S-adenosyl-L-homocysteine + 2 H(+). Its function is as follows. Catalyzes the methylthiolation of an aspartic acid residue of ribosomal protein uS12. This Clostridium botulinum (strain Langeland / NCTC 10281 / Type F) protein is Ribosomal protein uS12 methylthiotransferase RimO.